The following is a 531-amino-acid chain: Peptide chain release factor 3 (531 aa).

Residues 13-282 form the tr-type G domain; the sequence is SKRRTFAIIS…GLTQWAPSPM (270 aa). Residues 22–29, 90–94, and 144–147 contribute to the GTP site; these read SHPDAGKT, DTPGH, and NKLD.

The protein belongs to the TRAFAC class translation factor GTPase superfamily. Classic translation factor GTPase family. PrfC subfamily.

Its subcellular location is the cytoplasm. In terms of biological role, increases the formation of ribosomal termination complexes and stimulates activities of RF-1 and RF-2. It binds guanine nucleotides and has strong preference for UGA stop codons. It may interact directly with the ribosome. The stimulation of RF-1 and RF-2 is significantly reduced by GTP and GDP, but not by GMP. This chain is Peptide chain release factor 3, found in Vibrio cholerae serotype O1 (strain ATCC 39541 / Classical Ogawa 395 / O395).